The sequence spans 700 residues: UvrABC system protein C (700 aa).

The region spanning 11–90 (TTPGVYLYKD…IKKHRPRYNI (80 aa)) is the GIY-YIG domain. The UVR domain occupies 200–235 (TELIDMLRADMQAASDALEFEEAALLRDQLQAVERT).

Belongs to the UvrC family. In terms of assembly, interacts with UvrB in an incision complex.

The protein resides in the cytoplasm. Its function is as follows. The UvrABC repair system catalyzes the recognition and processing of DNA lesions. UvrC both incises the 5' and 3' sides of the lesion. The N-terminal half is responsible for the 3' incision and the C-terminal half is responsible for the 5' incision. This is UvrABC system protein C from Oleidesulfovibrio alaskensis (strain ATCC BAA-1058 / DSM 17464 / G20) (Desulfovibrio alaskensis).